Here is a 175-residue protein sequence, read N- to C-terminus: Cytidylate kinase (175 aa).

7 to 15 (GLPGSGTTT) contacts ATP.

It belongs to the cytidylate kinase family. Type 2 subfamily.

Its subcellular location is the cytoplasm. The enzyme catalyses CMP + ATP = CDP + ADP. It carries out the reaction dCMP + ATP = dCDP + ADP. The polypeptide is Cytidylate kinase (Methanococcoides burtonii (strain DSM 6242 / NBRC 107633 / OCM 468 / ACE-M)).